The chain runs to 462 residues: HEPACAM family member 2 (462 aa).

Positions 1–31 are cleaved as a signal peptide; the sequence is MGQDAFMEPFGDTLGVFQCKIYLLLFGACSG. 3 N-linked (GlcNAc...) asparagine glycosylation sites follow: N85, N129, and N165. Ig-like C2-type domains lie at 149 to 233 and 235 to 331; these read PVVQ…SDII and PIIY…THFT. 2 cysteine pairs are disulfide-bonded: C170-C219 and C270-C315. N320 carries an N-linked (GlcNAc...) asparagine glycan. Residues 352–372 form a helical membrane-spanning segment; that stretch reads LASITGISLFLIISMCLLFLW. Over 373-462 the chain is Cytoplasmic; the sequence is KKYQPYKVIK…IPAQQQDHPE (90 aa).

Poly-ADP-ribosylated (PARsylated) by tankyrase TNKS during late G2 and prophase, leading to translocation to mitotic centrosomes. Post-translationally, N-glycosylated. Widely expressed.

It localises to the golgi apparatus membrane. Its subcellular location is the cytoplasm. The protein localises to the cytoskeleton. The protein resides in the spindle. It is found in the microtubule organizing center. It localises to the centrosome. Its subcellular location is the midbody. Required during prometaphase for centrosome maturation. Following poly-ADP-ribosylation (PARsylation) by TNKS, translocates from the Golgi apparatus to mitotic centrosomes and plays a key role in the formation of robust microtubules for prompt movement of chromosomes: anchors AKAP9/CG-NAP, a scaffold protein of the gamma-tubulin ring complex and promotes centrosome maturation. The protein is HEPACAM family member 2 (HEPACAM2) of Homo sapiens (Human).